A 652-amino-acid chain; its full sequence is DNA ligase (652 aa).

NAD(+)-binding positions include 29-33 (DAEYD), 78-79 (SL), and Glu-107. The active-site N6-AMP-lysine intermediate is the Lys-109. Arg-130, Glu-164, Lys-278, and Lys-302 together coordinate NAD(+). Positions 395, 398, 413, and 418 each coordinate Zn(2+). Residues 577–652 (ADDAILSGKT…VKDEAWLLDL (76 aa)) enclose the BRCT domain.

The protein belongs to the NAD-dependent DNA ligase family. LigA subfamily. Requires Mg(2+) as cofactor. Mn(2+) is required as a cofactor.

The enzyme catalyses NAD(+) + (deoxyribonucleotide)n-3'-hydroxyl + 5'-phospho-(deoxyribonucleotide)m = (deoxyribonucleotide)n+m + AMP + beta-nicotinamide D-nucleotide.. Functionally, DNA ligase that catalyzes the formation of phosphodiester linkages between 5'-phosphoryl and 3'-hydroxyl groups in double-stranded DNA using NAD as a coenzyme and as the energy source for the reaction. It is essential for DNA replication and repair of damaged DNA. This is DNA ligase from Streptococcus thermophilus (strain CNRZ 1066).